The sequence spans 219 residues: Probable GTP-binding protein EngB (219 aa).

Residues 24-207 form the EngB-type G domain; sequence VQPEIAFAGR…HELIESWLRP (184 aa). GTP contacts are provided by residues 32 to 39, 59 to 63, 81 to 84, 148 to 151, and 186 to 188; these read GRSNAGKS, GRTQH, DLPG, TKCD, and FSA. Mg(2+)-binding residues include S39 and T61.

The protein belongs to the TRAFAC class TrmE-Era-EngA-EngB-Septin-like GTPase superfamily. EngB GTPase family. Mg(2+) is required as a cofactor.

Functionally, necessary for normal cell division and for the maintenance of normal septation. The chain is Probable GTP-binding protein EngB from Burkholderia vietnamiensis (strain G4 / LMG 22486) (Burkholderia cepacia (strain R1808)).